The chain runs to 239 residues: Purine nucleoside phosphorylase DeoD-type (239 aa).

Histidine 5 contributes to the a purine D-ribonucleoside binding site. Phosphate contacts are provided by residues glycine 21, arginine 25, arginine 44, and 88–91; that span reads RVGS. Residues 180 to 182 and 204 to 205 contribute to the a purine D-ribonucleoside site; these read EME and SD. Aspartate 205 functions as the Proton donor in the catalytic mechanism.

It belongs to the PNP/UDP phosphorylase family. In terms of assembly, homohexamer; trimer of homodimers.

It catalyses the reaction a purine D-ribonucleoside + phosphate = a purine nucleobase + alpha-D-ribose 1-phosphate. It carries out the reaction a purine 2'-deoxy-D-ribonucleoside + phosphate = a purine nucleobase + 2-deoxy-alpha-D-ribose 1-phosphate. Functionally, catalyzes the reversible phosphorolytic breakdown of the N-glycosidic bond in the beta-(deoxy)ribonucleoside molecules, with the formation of the corresponding free purine bases and pentose-1-phosphate. The sequence is that of Purine nucleoside phosphorylase DeoD-type from Salmonella arizonae (strain ATCC BAA-731 / CDC346-86 / RSK2980).